Consider the following 416-residue polypeptide: Trifolitoxin-processing protein TfxD (416 aa).

11 helical membrane passes run 24–44, 48–68, 79–99, 114–134, 153–173, 176–196, 230–250, 255–275, 295–315, 322–342, and 372–392; these read MIPNVADTIVVTLIGATALQV, VLITILTLNIAFLNFCSLICM, VFAAIVRAACMMIGVYLALIA, IAFIALSALRPFVAGWNAYCA, SSLIYAGVNLLFVGLSHFAGT, SIISLLIGVYLALFHNALAYA, ASFINMLEMGFLALVGWVVAA, IAVFYFPFFTLVELTSGLAIG, VLIAVYSTYSLLCFLIYVGLI, IFALPLSLAGLALLFLICDGL, and VILALAAVLGSVQALAIALVL.

It is found in the cell membrane. The actions of the proteins TfxB, TfxD and TfxF are implicated in the processing of the inactive trifolitoxin (TfxA) precursor into the active peptide. In Rhizobium leguminosarum bv. trifolii, this protein is Trifolitoxin-processing protein TfxD (tfxD).